The chain runs to 428 residues: Homoserine dehydrogenase (428 aa).

NADPH is bound by residues F10, T12, V13, R44, and K106. V13 provides a ligand contact to NAD(+). Residues V13, R44, and K106 each coordinate NADP(+). Na(+) contacts are provided by E130, V133, G135, and I137. 2 residues coordinate NADP(+): G188 and E191. L-homoserine contacts are provided by E191 and D202. Residue K206 is the Proton donor of the active site. G303 is an NADPH binding site. NAD(+) is bound at residue G303. An NADP(+)-binding site is contributed by G303. The 75-residue stretch at 351–425 (YFSVETPDST…DFKLLNYFKV (75 aa)) folds into the ACT domain.

Belongs to the homoserine dehydrogenase family. A metal cation serves as cofactor.

It catalyses the reaction L-homoserine + NADP(+) = L-aspartate 4-semialdehyde + NADPH + H(+). The enzyme catalyses L-homoserine + NAD(+) = L-aspartate 4-semialdehyde + NADH + H(+). It participates in amino-acid biosynthesis; L-methionine biosynthesis via de novo pathway; L-homoserine from L-aspartate: step 3/3. The protein operates within amino-acid biosynthesis; L-threonine biosynthesis; L-threonine from L-aspartate: step 3/5. In terms of biological role, catalyzes the conversion of L-aspartate-beta-semialdehyde (L-Asa) to L-homoserine (L-Hse), the third step in the biosynthesis of threonine and methionine from aspartate. The polypeptide is Homoserine dehydrogenase (hom) (Lactococcus lactis subsp. lactis (strain IL1403) (Streptococcus lactis)).